Consider the following 273-residue polypeptide: MKPLVKLFLLFCLVGIVLSRPMPEDEEPVAEGGDDDASGESEGEEETTDDAGGDGGEEENEGEEHAGDKDAGGEDTGKEENTGHDDAGEEDAGEEDAGEEDAGEEDAGEEDAEKEEGEKEDAGDDAGSDDGEEDSTGGDEGEDNAEDSKGSEKNDPADTYRQVVALLDKDTKVDHIQSEYLRSALNNDLQSEVRVPVVEAIGRIGDYSKIQGCFKSMGKDVKKVISEEEKKFKSCMSKKKSEYQCSEDSFAAAKSKLSPITSKIKSCVSSKGR.

Positions 1 to 19 are cleaved as a signal peptide; that stretch reads MKPLVKLFLLFCLVGIVLS. The segment at 20 to 160 is disordered; that stretch reads RPMPEDEEPV…SEKNDPADTY (141 aa). The span at 24–62 shows a compositional bias: acidic residues; that stretch reads EDEEPVAEGGDDDASGESEGEEETTDDAGGDGGEEENEG. The segment covering 63–86 has biased composition (basic and acidic residues); sequence EEHAGDKDAGGEDTGKEENTGHDD. The span at 87-145 shows a compositional bias: acidic residues; sequence AGEEDAGEEDAGEEDAGEEDAGEEDAEKEEGEKEDAGDDAGSDDGEEDSTGGDEGEDNA. A mediates binding of host collagen region spans residues 137-273; it reads GGDEGEDNAE…IKSCVSSKGR (137 aa). Positions 146–158 are enriched in basic and acidic residues; that stretch reads EDSKGSEKNDPAD. Intrachain disulfides connect cysteine 213/cysteine 267 and cysteine 235/cysteine 245.

The protein belongs to the aegyptin family. As to quaternary structure, monomer; exhibits non-globular elongated shape in solution. As to expression, female saliva (at protein level). Adult female salivary gland (at protein level).

It is found in the secreted. In terms of biological role, modulates blood feeding of female mosquitoes on vertebrate hosts. Inhibits collagen-induced platelet aggregation in the host via preventing collagen interaction with its three major ligands: glycoprotein VI, integrin alpha-2/beta-1 (ITGA2/ITGB1) and von Willebrand factor (VWF). Prevents collagen-mediated thrombus formation in the host. Binds to host collagens but not to laminin, vitronectin (VTN), fibronectin (FN1), von Willebrand factor (VWF) and fibrinogen. Influences cytokine production and populations of circulating leukocytes. (Microbial infection) Reduces replication of dengue virus type 2 at inoculation site and viremia levels on day 2 post-inoculation. Promotes production of pro-inflammatory cytokines, such as GM-CSF (CSF2), IFN-gamma (IFNG), IL5 and IL6, in the lymph nodes of mice infected with dengue virus type 2. Increases the number of circulating eosinophils in mice infected with dengue virus type 2. Decreases the number of circulating monocytes in mice infected with dengue virus type 2. The polypeptide is Aegyptin (Aedes aegypti (Yellowfever mosquito)).